The chain runs to 160 residues: Cytochrome b6-f complex subunit 4 (160 aa).

3 helical membrane-spanning segments follow: residues 36-56 (LLYI…GLGV), 95-115 (LLGV…PFIE), and 131-151 (LVFL…TMPI).

The protein belongs to the cytochrome b family. PetD subfamily. The 4 large subunits of the cytochrome b6-f complex are cytochrome b6, subunit IV (17 kDa polypeptide, petD), cytochrome f and the Rieske protein, while the 4 small subunits are petG, petL, petM and petN. The complex functions as a dimer.

The protein resides in the plastid. The protein localises to the chloroplast thylakoid membrane. Its function is as follows. Component of the cytochrome b6-f complex, which mediates electron transfer between photosystem II (PSII) and photosystem I (PSI), cyclic electron flow around PSI, and state transitions. This chain is Cytochrome b6-f complex subunit 4, found in Emiliania huxleyi (Coccolithophore).